A 55-amino-acid chain; its full sequence is Large ribosomal subunit protein bL33 (55 aa).

Belongs to the bacterial ribosomal protein bL33 family.

The chain is Large ribosomal subunit protein bL33 (rpmG) from Buchnera aphidicola subsp. Acyrthosiphon pisum (strain APS) (Acyrthosiphon pisum symbiotic bacterium).